Consider the following 272-residue polypeptide: Type III pantothenate kinase (272 aa).

6-13 (DVRNTHTV) contributes to the ATP binding site. 109–112 (GADR) contacts substrate. The active-site Proton acceptor is Asp111. Asp131 contacts K(+). Ser134 contacts ATP. Thr186 provides a ligand contact to substrate.

The protein belongs to the type III pantothenate kinase family. As to quaternary structure, homodimer. NH4(+) is required as a cofactor. The cofactor is K(+).

It is found in the cytoplasm. It catalyses the reaction (R)-pantothenate + ATP = (R)-4'-phosphopantothenate + ADP + H(+). It participates in cofactor biosynthesis; coenzyme A biosynthesis; CoA from (R)-pantothenate: step 1/5. Its function is as follows. Catalyzes the phosphorylation of pantothenate (Pan), the first step in CoA biosynthesis. This is Type III pantothenate kinase from Mycobacterium bovis (strain BCG / Pasteur 1173P2).